Here is a 466-residue protein sequence, read N- to C-terminus: Ribulose bisphosphate carboxylase (466 aa).

Asparagine 111 provides a ligand contact to substrate. The active-site Proton acceptor is lysine 166. Lysine 168 is a substrate binding site. 3 residues coordinate Mg(2+): lysine 191, aspartate 193, and glutamate 194. At lysine 191 the chain carries N6-carboxylysine. Residue histidine 287 is the Proton acceptor of the active site. Residues arginine 288, histidine 321, and serine 368 each coordinate substrate.

The protein belongs to the RuBisCO large chain family. Type II subfamily. As to quaternary structure, homodimer. Mg(2+) serves as cofactor.

The enzyme catalyses 2 (2R)-3-phosphoglycerate + 2 H(+) = D-ribulose 1,5-bisphosphate + CO2 + H2O. It catalyses the reaction D-ribulose 1,5-bisphosphate + O2 = 2-phosphoglycolate + (2R)-3-phosphoglycerate + 2 H(+). RuBisCO catalyzes two reactions: the carboxylation of D-ribulose 1,5-bisphosphate, the primary event in carbon dioxide fixation, as well as the oxidative fragmentation of the pentose substrate. Both reactions occur simultaneously and in competition at the same active site. The chain is Ribulose bisphosphate carboxylase from Rhodospirillum rubrum (strain ATCC 11170 / ATH 1.1.1 / DSM 467 / LMG 4362 / NCIMB 8255 / S1).